The following is a 610-amino-acid chain: Propanediol dehydratase-reactivating factor large subunit (610 aa).

11-13 (NSS) contacts ATP. Mg(2+) is bound by residues Thr-105, Asp-166, and Asp-183. ATP is bound by residues 459–462 (EEIK), 557–558 (GS), and Arg-591.

It belongs to the DdrA/PduG family. Forms a heterotetramer PduG(2)/PduH(2). Mg(2+) serves as cofactor.

Its subcellular location is the bacterial microcompartment. It carries out the reaction ATP + H2O = ADP + phosphate + H(+). It participates in polyol metabolism; 1,2-propanediol degradation. Functionally, large subunit of the propanediol dehydratase-reactivating factor (DDR), which reactivates suicidally inhibited adenosylcobalamin-dependent propanediol dehydratase (diol dehydratase, DDH) found in the bacterial microcompartment (BMC) dedicated to 1,2-propanediol (1,2-PD) degradation. Reactivates inactivated DDH in the presence of ATP, Mg(2+) and free adenosylcobalamin (AdoCbl), by mediating the exchange of the tightly bound damaged cofactor AdoCbl for a free intact one. This subunit contains the adenosine nucleotide binding site. Its function is as follows. Expression of a cosmid containing the full 21-gene pdu operon in E.coli allows E.coli to grow on 1,2-propanediol (1,2-PD) with the appearance of bacterial microcompartments (BMC) in its cytoplasm. In terms of biological role, the 1,2-PD-specific bacterial microcompartment (BMC) concentrates low levels of 1,2-PD catabolic enzymes, concentrates volatile reaction intermediates thus enhancing pathway flux and keeps the level of toxic, mutagenic propionaldehyde low. The polypeptide is Propanediol dehydratase-reactivating factor large subunit (Citrobacter freundii).